The chain runs to 421 residues: UDP-N-acetylglucosamine 1-carboxyvinyltransferase (421 aa).

22–23 (KN) contacts phosphoenolpyruvate. Arginine 93 serves as a coordination point for UDP-N-acetyl-alpha-D-glucosamine. Cysteine 117 functions as the Proton donor in the catalytic mechanism. Residue cysteine 117 is modified to 2-(S-cysteinyl)pyruvic acid O-phosphothioketal. Residues 122–126 (RPVDQ), aspartate 309, and isoleucine 331 contribute to the UDP-N-acetyl-alpha-D-glucosamine site.

It belongs to the EPSP synthase family. MurA subfamily.

The protein resides in the cytoplasm. The catalysed reaction is phosphoenolpyruvate + UDP-N-acetyl-alpha-D-glucosamine = UDP-N-acetyl-3-O-(1-carboxyvinyl)-alpha-D-glucosamine + phosphate. The protein operates within cell wall biogenesis; peptidoglycan biosynthesis. Functionally, cell wall formation. Adds enolpyruvyl to UDP-N-acetylglucosamine. In Albidiferax ferrireducens (strain ATCC BAA-621 / DSM 15236 / T118) (Rhodoferax ferrireducens), this protein is UDP-N-acetylglucosamine 1-carboxyvinyltransferase.